The chain runs to 582 residues: Vesicular glutamate transporter 2 (582 aa).

Over 1–71 (MESVKQRILT…CTCFGLPRRY (71 aa)) the chain is Cytoplasmic. The helical transmembrane segment at 72-92 (IIAIMSGLGFCISFGIRCNLG) threads the bilayer. At 93–125 (VAIVDMVNNSTIHRGGKVIKEKAKFNWDPETVG) the chain is on the vesicular side. N-linked (GlcNAc...) asparagine glycans are attached at residues N100 and N101. A helical transmembrane segment spans residues 126-146 (MIHGSFFWGYIITQIPGGYIA). Over 147–148 (SR) the chain is Cytoplasmic. The chain crosses the membrane as a helical span at residues 149-169 (LAANRVFGAAILLTSTLNMLI). At 170–177 (PSAARVHY) the chain is on the vesicular side. The helical transmembrane segment at 178-198 (GCVIFVRILQGLVEGVTYPAC) threads the bilayer. Residues 199-216 (HGIWSKWAPPLERSRLAT) lie on the Cytoplasmic side of the membrane. A helical membrane pass occupies residues 217-237 (TSFCGSYAGAVIAMPLAGILV). At 238–244 (QYTGWSS) the chain is on the vesicular side. A helical transmembrane segment spans residues 245 to 265 (VFYVYGSFGMIWYMFWLLVSY). At 266-310 (ESPAKHPTITDEERRYIEESIGESANLLGAMEKFKTPWRKFFTSM) the chain is on the cytoplasmic side. A helical membrane pass occupies residues 311-331 (PVYAIIVANFCRSWTFYLLLI). The Vesicular segment spans residues 332 to 349 (SQPAYFEEVFGFEISKVG). The helical transmembrane segment at 350–370 (MLSAVPHLVMTIIVPIGGQIA) threads the bilayer. Residues 371-386 (DFLRSKQILSTTTVRK) lie on the Cytoplasmic side of the membrane. The chain crosses the membrane as a helical span at residues 387 to 407 (IMNCGGFGMEATLLLVVGYSH). At 408-409 (TR) the chain is on the vesicular side. Residues 410-430 (GVAISFLVLAVGFSGFAISGF) form a helical membrane-spanning segment. Residues 431–443 (NVNHLDIAPRYAS) are Cytoplasmic-facing. Residues 444-464 (ILMGISNGVGTLSGMVCPIIV) traverse the membrane as a helical segment. Over 465–477 (GAMTKNKSREEWQ) the chain is Vesicular. A glycan (N-linked (GlcNAc...) asparagine) is linked at N470. The helical transmembrane segment at 478–498 (YVFLIAALVHYGGVIFYAIFA) threads the bilayer. Topologically, residues 499-582 (SGEKQPWADP…YNYKDRDDYS (84 aa)) are cytoplasmic.

This sequence belongs to the major facilitator superfamily. Sodium/anion cotransporter family. VGLUT subfamily.

The protein localises to the cytoplasmic vesicle. It is found in the secretory vesicle. It localises to the synaptic vesicle membrane. Its subcellular location is the synapse. The protein resides in the synaptosome. The protein localises to the cell membrane. The enzyme catalyses L-glutamate(out) = L-glutamate(in). The catalysed reaction is 3 Na(+)(out) + phosphate(out) = 3 Na(+)(in) + phosphate(in). It catalyses the reaction phosphate(in) = phosphate(out). It carries out the reaction K(+)(in) + H(+)(out) = K(+)(out) + H(+)(in). The enzyme catalyses chloride(in) = chloride(out). Chloride channel activity is allosterically activated by lumenal H(+) and Cl(-) leading to synaptic vesicles acidification. The L-glutamate transport activity is allosterically activated by lumenal H(+) and Cl(-). The allosteric requirement for H(+) efficiently prevents non-vesicular efflux across the plasma membrane. The L-glutamate uniporter activity exhibits a biphasic dependence on chloride concentration. In terms of biological role, multifunctional transporter that transports L-glutamate as well as multiple ions such as chloride, proton, potassium, sodium and phosphate. At the synaptic vesicle membrane, mainly functions as a uniporter which transports preferentially L-glutamate but also, phosphate from the cytoplasm into synaptic vesicles at presynaptic nerve terminals of excitatory neural cells. The L-glutamate or phosphate uniporter activity is electrogenic and is driven by the proton electrochemical gradient, mainly by the electrical gradient established by the vacuolar H(+)-ATPase across the synaptic vesicle membrane. In addition, functions as a chloride channel that allows a chloride permeation through the synaptic vesicle membrane therefore affects the proton electrochemical gradient and promotes synaptic vesicles acidification. Moreover, functions as a vesicular K(+)/H(+) antiport allowing to maintain the electrical gradient and to decrease chemical gradient and therefore sustain vesicular L-glutamate uptake. The vesicular H(+)/H(+) antiport activity is electroneutral. At the plasma membrane, following exocytosis, functions as a symporter of Na(+) and phosphate from the extracellular space to the cytoplasm allowing synaptic phosphate homeostasis regulation. The symporter activity is driven by an inside negative membrane potential and is electrogenic. Also involved in the regulation of retinal hyaloid vessel regression during postnatal development. May also play a role in the endocrine L-glutamatergic system of other tissues such as pineal gland and pancreas. This chain is Vesicular glutamate transporter 2, found in Bos taurus (Bovine).